A 37-amino-acid chain; its full sequence is Large ribosomal subunit protein bL36 (37 aa).

This sequence belongs to the bacterial ribosomal protein bL36 family.

This chain is Large ribosomal subunit protein bL36, found in Thioalkalivibrio sulfidiphilus (strain HL-EbGR7).